The primary structure comprises 347 residues: NADH-ubiquinone oxidoreductase chain 2 (347 aa).

11 helical membrane passes run 3–23 (PLIL…VMMS), 25–45 (HWLM…PLLM), 59–79 (YFLT…INLM), 96–116 (IIMT…FWVP), 122–142 (ISLT…LSIL), 148–168 (VINP…GGWG), 178–198 (ILAY…AFNP), 202–222 (LLNL…FMVA), 240–260 (ITTS…LAGF), 276–296 (IILA…YIRL), and 326–346 (LPPL…MILL).

The protein belongs to the complex I subunit 2 family. In terms of assembly, core subunit of respiratory chain NADH dehydrogenase (Complex I) which is composed of 45 different subunits. Interacts with TMEM242.

It localises to the mitochondrion inner membrane. The enzyme catalyses a ubiquinone + NADH + 5 H(+)(in) = a ubiquinol + NAD(+) + 4 H(+)(out). In terms of biological role, core subunit of the mitochondrial membrane respiratory chain NADH dehydrogenase (Complex I) which catalyzes electron transfer from NADH through the respiratory chain, using ubiquinone as an electron acceptor. Essential for the catalytic activity and assembly of complex I. The polypeptide is NADH-ubiquinone oxidoreductase chain 2 (Peropteryx kappleri (Greater dog-like bat)).